Here is a 484-residue protein sequence, read N- to C-terminus: Glutamyl-tRNA(Gln) amidotransferase subunit A (484 aa).

Catalysis depends on charge relay system residues Lys-77 and Ser-152. Residue Ser-176 is the Acyl-ester intermediate of the active site.

It belongs to the amidase family. GatA subfamily. In terms of assembly, heterotrimer of A, B and C subunits.

The catalysed reaction is L-glutamyl-tRNA(Gln) + L-glutamine + ATP + H2O = L-glutaminyl-tRNA(Gln) + L-glutamate + ADP + phosphate + H(+). Its function is as follows. Allows the formation of correctly charged Gln-tRNA(Gln) through the transamidation of misacylated Glu-tRNA(Gln) in organisms which lack glutaminyl-tRNA synthetase. The reaction takes place in the presence of glutamine and ATP through an activated gamma-phospho-Glu-tRNA(Gln). This is Glutamyl-tRNA(Gln) amidotransferase subunit A from Pseudomonas aeruginosa (strain ATCC 15692 / DSM 22644 / CIP 104116 / JCM 14847 / LMG 12228 / 1C / PRS 101 / PAO1).